Reading from the N-terminus, the 507-residue chain is NADH-quinone oxidoreductase subunit N (507 aa).

A run of 15 helical transmembrane segments spans residues L17–A37, V46–G66, Y81–Y101, A113–H133, F134–Y154, Y168–A188, L190–E210, L211–V231, P245–L265, I279–L299, I307–D327, V334–V354, A392–I412, S425–M445, and L478–V498.

Belongs to the complex I subunit 2 family. As to quaternary structure, NDH-1 is composed of 14 different subunits. Subunits NuoA, H, J, K, L, M, N constitute the membrane sector of the complex.

It is found in the cell inner membrane. It catalyses the reaction a quinone + NADH + 5 H(+)(in) = a quinol + NAD(+) + 4 H(+)(out). NDH-1 shuttles electrons from NADH, via FMN and iron-sulfur (Fe-S) centers, to quinones in the respiratory chain. The immediate electron acceptor for the enzyme in this species is believed to be ubiquinone. Couples the redox reaction to proton translocation (for every two electrons transferred, four hydrogen ions are translocated across the cytoplasmic membrane), and thus conserves the redox energy in a proton gradient. This chain is NADH-quinone oxidoreductase subunit N, found in Nitrosospira multiformis (strain ATCC 25196 / NCIMB 11849 / C 71).